Consider the following 969-residue polypeptide: RNA polymerase-associated protein RapA (969 aa).

Positions 164–334 constitute a Helicase ATP-binding domain; the sequence is EVGRRHAPRV…FARLRLLDPD (171 aa). An ATP-binding site is contributed by 177 to 184; the sequence is DEVGLGKT. Residues 280–283 carry the DEAH box motif; the sequence is DEAH. Positions 492–646 constitute a Helicase C-terminal domain; that stretch reads RVNWLLEKVK…TCPTGRAVYD (155 aa).

Belongs to the SNF2/RAD54 helicase family. RapA subfamily. In terms of assembly, interacts with the RNAP. Has a higher affinity for the core RNAP than for the holoenzyme. Its ATPase activity is stimulated by binding to RNAP.

Functionally, transcription regulator that activates transcription by stimulating RNA polymerase (RNAP) recycling in case of stress conditions such as supercoiled DNA or high salt concentrations. Probably acts by releasing the RNAP, when it is trapped or immobilized on tightly supercoiled DNA. Does not activate transcription on linear DNA. Probably not involved in DNA repair. This Vibrio campbellii (strain ATCC BAA-1116) protein is RNA polymerase-associated protein RapA.